We begin with the raw amino-acid sequence, 179 residues long: Probable inosine/xanthosine triphosphatase (179 aa).

13 to 18 provides a ligand contact to substrate; the sequence is STNPVK. Mg(2+) is bound at residue Q70.

It belongs to the YjjX NTPase family. Homodimer. The cofactor is Mg(2+). It depends on Mn(2+) as a cofactor.

It catalyses the reaction XTP + H2O = XDP + phosphate + H(+). The catalysed reaction is ITP + H2O = IDP + phosphate + H(+). Functionally, phosphatase that hydrolyzes non-canonical purine nucleotides such as XTP and ITP to their respective diphosphate derivatives. Probably excludes non-canonical purines from DNA/RNA precursor pool, thus preventing their incorporation into DNA/RNA and avoiding chromosomal lesions. This Methanocaldococcus jannaschii (strain ATCC 43067 / DSM 2661 / JAL-1 / JCM 10045 / NBRC 100440) (Methanococcus jannaschii) protein is Probable inosine/xanthosine triphosphatase.